A 248-amino-acid chain; its full sequence is Protein canopy homolog 4 (248 aa).

Positions 1–21 (MGPVRLGILLFLFLAVHEAWA) are cleaved as a signal peptide. Disulfide bonds link cysteine 38-cysteine 196, cysteine 41-cysteine 184, and cysteine 94-cysteine 156. Positions 200 to 248 (TWTGKEITDGEEKTEGEEEQEEEEEEEEEEGGDKMTKTGSHPKLDREDL) are disordered. A compositionally biased stretch (acidic residues) spans 213 to 230 (TEGEEEQEEEEEEEEEEG). Residues 231–248 (GDKMTKTGSHPKLDREDL) are compositionally biased toward basic and acidic residues.

The protein belongs to the canopy family. In terms of assembly, interacts with TLR4.

Its subcellular location is the secreted. In terms of biological role, plays a role in the regulation of the cell surface expression of TLR4. The protein is Protein canopy homolog 4 (CNPY4) of Homo sapiens (Human).